The primary structure comprises 548 residues: MDRLLTYFQVRGERANAVRLFGEISEQIDCSHLKRDCFVNGICARQHFKECCNIATDNGSRTNADKLVALAMRALLDRQTIWACVIKNADYVSQYADEQMEEEVNKLYDVYLQSGTREEFEGFRQRSRPSRVVMDDSCSMLSYFYIPMNQGNPAPVAKLSRWGQFGICYYDRTNVDGLIPYDEIGLAQAIDGLKDLIEGRLPVCPYTGVNSRINAVLHLPLEMEVIMAVQENATQLMRRAAQDFKFITHAGWKLYPRLLRQRFAIGDACGGVIHHVMLGHLRYYDGDTSIVKYCFLYDGSLDWRTWTVPLHLMRTARLGHLQPESILFFMHKSLRVRYVLWLTSLCLTQSQWLIQKLPELTGGTDVFYTRAYVHAENHKVPNDRDLMMNEVFRKIDDHWVIQKCHTTKEAITVTAIQIQRSIRGDGQWDTPMFHQSMALLTRLIVYWLTDVTERSAIFRLTCYAIFGCKPTARGRYIDWDDLGTFMKNVLDGRDLTVLEDETCFISMMRMAMLHVRRSKVVCATVLEAPLEIQQVGQIVEVPFDFMHN.

The protein belongs to the orbivirus non-structural protein NS1 family.

The sequence is that of Non-structural protein NS1 (Segment-5) from Camelus dromedarius (Dromedary).